The following is a 110-amino-acid chain: MTYVCTACKLKFHTFEEFKIHVHLFHPELDKLVEPFPDRKEYRLSIRLDKQTYNMLLNIKNNIQRDNDIGLNTTIKALIYIVNYLLSKGYTIDELTNLPNKVSVIVGGDK.

Residues 3 to 26 form a C2H2-type zinc finger; it reads YVCTACKLKFHTFEEFKIHVHLFH.

The protein is Putative zinc finger protein ORF110 of Acidianus filamentous virus 1 (isolate United States/Yellowstone) (AFV-1).